A 36-amino-acid polypeptide reads, in one-letter code: Serine protease inhibitor 2 (36 aa).

The Pacifastin domain maps to 1–36; the sequence is EISCEPGTTFQDKCNTCRCGKDGKSAAGCTLKACPQ. Intrachain disulfides connect Cys-4–Cys-19, Cys-14–Cys-34, and Cys-17–Cys-29.

The protein belongs to the protease inhibitor I19 family. In terms of tissue distribution, expressed in hemolymph.

Its subcellular location is the secreted. Probable serine protease inhibitor. The sequence is that of Serine protease inhibitor 2 from Melanoplus sanguinipes (Migratory grasshopper).